A 150-amino-acid chain; its full sequence is Histone H3-like centromeric protein A (150 aa).

Positions 1–55 are disordered; that stretch reads MRPGSTPPSRRKSRPPRRVSPPLPTTSRTSPRRPHAQQQRRASRASPKKRFRPGT. The segment covering 41–53 has biased composition (basic residues); it reads RASRASPKKRFRP. The segment at 53-150 is H3-like; it reads PGTRALMEIR…RIRGVNEGLG (98 aa).

It belongs to the histone H3 family. Component of centromeric nucleosomes, where DNA is wrapped around a histone octamer core. The octamer contains two molecules each of H2A, H2B, CENPA and H4 assembled in one CENPA-H4 heterotetramer and two H2A-H2B heterodimers. CENPA modulates the DNA-binding characteristics of nucleosomes so that protruding DNA ends have higher flexibility than in nucleosomes containing conventional histone H3.

The protein localises to the nucleus. It is found in the chromosome. It localises to the centromere. Histone H3-like nucleosomal protein that is specifically found in centromeric nucleosomes. Replaces conventional H3 in the nucleosome core of centromeric chromatin that serves as an assembly site for the inner kinetochore. The presence of CENPA subtly modifies the nucleosome structure and the way DNA is wrapped around the nucleosome and gives rise to protruding DNA ends that are less well-ordered and rigid compared to nucleosomes containing histone H3. May serve as an epigenetic mark that propagates centromere identity through replication and cell division. Required for recruitment and assembly of kinetochore proteins, and as a consequence required for progress through mitosis, chromosome segregation and cytokinesis. This Xenopus laevis (African clawed frog) protein is Histone H3-like centromeric protein A (cenpa).